Here is a 371-residue protein sequence, read N- to C-terminus: tRNA N6-adenosine threonylcarbamoyltransferase (371 aa).

Fe cation-binding residues include H110 and H114. Residues L132–G136, D165, G178, D182, and N289 contribute to the substrate site. D317 lines the Fe cation pocket.

This sequence belongs to the KAE1 / TsaD family. Fe(2+) is required as a cofactor.

The protein localises to the cytoplasm. It catalyses the reaction L-threonylcarbamoyladenylate + adenosine(37) in tRNA = N(6)-L-threonylcarbamoyladenosine(37) in tRNA + AMP + H(+). In terms of biological role, required for the formation of a threonylcarbamoyl group on adenosine at position 37 (t(6)A37) in tRNAs that read codons beginning with adenine. Is involved in the transfer of the threonylcarbamoyl moiety of threonylcarbamoyl-AMP (TC-AMP) to the N6 group of A37, together with TsaE and TsaB. TsaD likely plays a direct catalytic role in this reaction. The polypeptide is tRNA N6-adenosine threonylcarbamoyltransferase (Solidesulfovibrio magneticus (strain ATCC 700980 / DSM 13731 / RS-1) (Desulfovibrio magneticus)).